Here is a 191-residue protein sequence, read N- to C-terminus: MSAPSQARHIVNFITGNANKLGEVKAILEPAIQVENQALDLLEIQGTLEEVTLDKCRRAADLVQGPVLVEDTCLCFNALKGLPGPYIKWFMNSLGHEGLNNLLAAYEDKSAKAVCTFGYSAGPGHEPILFQGITDGKIVPPRGPPNFGWDAIFEYEGQTYAEMDKAEKNKISHRAKALAKLQEWFAKEMTA.

Residue 15–20 (TGNANK) coordinates ITP. Position 43 (Glu43) interacts with Mg(2+). Residues Lys55, 71–72 (DT), Lys88, 147–150 (FGWD), Lys168, and 173–174 (HR) contribute to the ITP site.

The protein belongs to the HAM1 NTPase family. As to quaternary structure, homodimer. Mg(2+) is required as a cofactor. Mn(2+) serves as cofactor.

It is found in the cytoplasm. Its subcellular location is the nucleus. It catalyses the reaction ITP + H2O = IMP + diphosphate + H(+). The catalysed reaction is dITP + H2O = dIMP + diphosphate + H(+). The enzyme catalyses XTP + H2O = XMP + diphosphate + H(+). Pyrophosphatase that hydrolyzes non-canonical purine nucleotides such as inosine triphosphate (ITP), deoxyinosine triphosphate (dITP) or xanthosine 5'-triphosphate (XTP) to their respective monophosphate derivatives. The enzyme does not distinguish between the deoxy- and ribose forms. Probably excludes non-canonical purines from RNA and DNA precursor pools, thus preventing their incorporation into RNA and DNA and avoiding chromosomal lesions. This Neurospora crassa (strain ATCC 24698 / 74-OR23-1A / CBS 708.71 / DSM 1257 / FGSC 987) protein is Inosine triphosphate pyrophosphatase.